The primary structure comprises 1234 residues: 1-phosphatidylinositol 4,5-bisphosphate phosphodiesterase beta-3 (1234 aa).

The residue at position 2 (Ala2) is an N-acetylalanine. Residues 318-468 enclose the PI-PLC X-box domain; sequence DMTQPLSAYF…LMGRILVKNK (151 aa). Active-site residues include His332 and His379. The disordered stretch occupies residues 467–587; sequence NKKRHRPSAG…GTASSEVNAT (121 aa). 4 positions are modified to phosphoserine: Ser474, Ser490, Ser495, and Ser537. The segment covering 488–515 has biased composition (low complexity); the sequence is EQSNSALSESSAATEPSSPQLGSPSSDS. The span at 555–567 shows a compositional bias: acidic residues; it reads REDEEEDEEEEEQ. The segment covering 576–587 has biased composition (polar residues); it reads DEGTASSEVNAT. The region spanning 590–706 is the PI-PLC Y-box domain; sequence MSTLVNYIEP…GYLLKPEFMR (117 aa). Residues 707 to 835 form the C2 domain; that stretch reads RPDKSFDPFT…RNEANQPLCL (129 aa). Over residues 887 to 908 the composition is skewed to polar residues; it reads AGQETCQDTQSQQLGSQPSSNP. A disordered region spans residues 887-937; that stretch reads AGQETCQDTQSQQLGSQPSSNPTPSPLDASPRRPPGPTTSPASTSLSSPGQ. Low complexity predominate over residues 925–936; that stretch reads TSPASTSLSSPG. A phosphoserine mark is found at Ser926 and Ser1105. Residues 1198-1234 form a disordered region; it reads GLGDGPLVACASNGHAPGSSGHLSGADSESQEENTQL. The interval 1231-1234 is interaction with SHANK2; that stretch reads NTQL.

In terms of assembly, interacts with SHANK2. Interacts with LPAR2. The cofactor is Ca(2+).

The protein localises to the cytoplasm. Its subcellular location is the membrane. It localises to the nucleus. The catalysed reaction is a 1,2-diacyl-sn-glycero-3-phospho-(1D-myo-inositol-4,5-bisphosphate) + H2O = 1D-myo-inositol 1,4,5-trisphosphate + a 1,2-diacyl-sn-glycerol + H(+). The enzyme catalyses a 1,2-diacyl-sn-glycero-3-phospho-(1D-myo-inositol) + H2O = 1D-myo-inositol 1-phosphate + a 1,2-diacyl-sn-glycerol + H(+). Activated by G(q)/G(11) G alpha proteins in response to ligand-binding to G protein-coupled receptors. Its function is as follows. Catalyzes the production of the second messenger molecules diacylglycerol (DAG) and inositol 1,4,5-trisphosphate (IP3). Key transducer of G protein-coupled receptor signaling: activated by G(q)/G(11) G alpha proteins downstream of G protein-coupled receptors activation. In neutrophils, participates in a phospholipase C-activating N-formyl peptide-activated GPCR (G protein-coupled receptor) signaling pathway by promoting RASGRP4 activation by DAG, to promote neutrophil functional responses. The polypeptide is 1-phosphatidylinositol 4,5-bisphosphate phosphodiesterase beta-3 (Homo sapiens (Human)).